Reading from the N-terminus, the 428-residue chain is Glutamyl-tRNA reductase (428 aa).

Substrate-binding positions include 49–52 (TCNR), Ser109, 114–116 (EGQ), and Gln120. The active-site Nucleophile is Cys50. 189 to 194 (GAGKMS) is an NADP(+) binding site.

Belongs to the glutamyl-tRNA reductase family. In terms of assembly, homodimer.

The catalysed reaction is (S)-4-amino-5-oxopentanoate + tRNA(Glu) + NADP(+) = L-glutamyl-tRNA(Glu) + NADPH + H(+). The protein operates within porphyrin-containing compound metabolism; protoporphyrin-IX biosynthesis; 5-aminolevulinate from L-glutamyl-tRNA(Glu): step 1/2. It participates in porphyrin-containing compound metabolism; chlorophyll biosynthesis. Functionally, catalyzes the NADPH-dependent reduction of glutamyl-tRNA(Glu) to glutamate 1-semialdehyde (GSA). This Microcystis aeruginosa (strain NIES-843 / IAM M-2473) protein is Glutamyl-tRNA reductase.